The following is a 290-amino-acid chain: Shikimate dehydrogenase (NADP(+)) (290 aa).

Shikimate-binding positions include 20–22 (SLS) and threonine 67. Lysine 71 functions as the Proton acceptor in the catalytic mechanism. Positions 92 and 107 each coordinate shikimate. NADP(+) is bound by residues 130-134 (GAGGA) and leucine 227. Tyrosine 229 provides a ligand contact to shikimate. An NADP(+)-binding site is contributed by glycine 250.

The protein belongs to the shikimate dehydrogenase family. Homodimer.

The enzyme catalyses shikimate + NADP(+) = 3-dehydroshikimate + NADPH + H(+). It functions in the pathway metabolic intermediate biosynthesis; chorismate biosynthesis; chorismate from D-erythrose 4-phosphate and phosphoenolpyruvate: step 4/7. In terms of biological role, involved in the biosynthesis of the chorismate, which leads to the biosynthesis of aromatic amino acids. Catalyzes the reversible NADPH linked reduction of 3-dehydroshikimate (DHSA) to yield shikimate (SA). This is Shikimate dehydrogenase (NADP(+)) from Syntrophomonas wolfei subsp. wolfei (strain DSM 2245B / Goettingen).